A 213-amino-acid chain; its full sequence is Probable thymidylate kinase 2 (213 aa).

10-17 (GIDGSGKS) lines the ATP pocket.

It belongs to the thymidylate kinase family.

The catalysed reaction is dTMP + ATP = dTDP + ADP. The polypeptide is Probable thymidylate kinase 2 (tmk2) (Saccharolobus solfataricus (strain ATCC 35092 / DSM 1617 / JCM 11322 / P2) (Sulfolobus solfataricus)).